Here is a 412-residue protein sequence, read N- to C-terminus: Putative oxidoreductase bli-4, mitochondrial (412 aa).

Residues 1–55 (MSTKLCQRIARTATLSPTSLVPRSSRLIPIVSSAAVRPSSAIPTRRPFSTTESRY) constitute a mitochondrion transit peptide. The NADP(+) site is built by isoleucine 108, asparagine 120, asparagine 186, tyrosine 269, lysine 273, valine 308, threonine 310, and glutamine 312. Tyrosine 269 functions as the Proton donor in the catalytic mechanism. Residue lysine 273 is the Lowers pKa of active site Tyr of the active site.

The protein belongs to the short-chain dehydrogenases/reductases (SDR) family.

Its subcellular location is the mitochondrion. May play a role as an NAD-dependent dehydrogenase in the mitochondria. This Neurospora crassa (strain ATCC 24698 / 74-OR23-1A / CBS 708.71 / DSM 1257 / FGSC 987) protein is Putative oxidoreductase bli-4, mitochondrial (bli-4).